A 354-amino-acid chain; its full sequence is Dihydroorotate dehydrogenase (quinone) (354 aa).

FMN contacts are provided by residues 61–65 (AGYDK) and Ala85. Substrate is bound at residue Lys65. 110 to 114 (NRFGF) provides a ligand contact to substrate. 2 residues coordinate FMN: Asn139 and Asn170. Residue Asn170 coordinates substrate. Ser173 functions as the Nucleophile in the catalytic mechanism. Asn175 is a substrate binding site. FMN is bound by residues Lys211 and Thr239. Residue 240–241 (NT) coordinates substrate. FMN is bound by residues Gly261, Gly290, and 311-312 (YT).

This sequence belongs to the dihydroorotate dehydrogenase family. Type 2 subfamily. Monomer. Requires FMN as cofactor.

The protein localises to the cell membrane. The enzyme catalyses (S)-dihydroorotate + a quinone = orotate + a quinol. It participates in pyrimidine metabolism; UMP biosynthesis via de novo pathway; orotate from (S)-dihydroorotate (quinone route): step 1/1. Catalyzes the conversion of dihydroorotate to orotate with quinone as electron acceptor. The protein is Dihydroorotate dehydrogenase (quinone) of Cereibacter sphaeroides (strain ATCC 17023 / DSM 158 / JCM 6121 / CCUG 31486 / LMG 2827 / NBRC 12203 / NCIMB 8253 / ATH 2.4.1.) (Rhodobacter sphaeroides).